The sequence spans 416 residues: MIQERADIEKAYASNLRKFAARLEMFLRTGVEYGTATNILSGLAKEAEDNAELHSNIAAGLINPVQLGIKNWQRENFHKSSISTSIKEVKNFDSEFENAQKTWYKHYKNVNRCKKEYFHACKTVRSLQVQVQNAKNEPFGTPEQQAQRGKELRKMEDKLRKGIMEEEKTRKAYEEAISSLSDVTPRYIEDMTQVFNKAQAFERERIVYFKEQALQMQAVLDISAKPNLSQIFVELRETVAKVDADADLKKWSLAYGVDMAPNFPVFQEYSPEMSALGKKGRSALADGSSGGVTLTSLKTFTSPDRGGPIPGTTDSGSNISTSPVHTTDYTSSVNGAAAAVSKEKQRVEDTPPYPDFVDDGRPGVPIRALYDYVGVEADELSFNSGDLFEKLEDEDEQGWCKGRKDGRVGLYPRQLR.

The F-BAR domain occupies 1–247; sequence MIQERADIEK…TVAKVDADAD (247 aa). Positions 297–327 are disordered; it reads LKTFTSPDRGGPIPGTTDSGSNISTSPVHTT. Over residues 312–327 the composition is skewed to polar residues; it reads TTDSGSNISTSPVHTT. Positions 361 to 416 constitute an SH3 domain; the sequence is RPGVPIRALYDYVGVEADELSFNSGDLFEKLEDEDEQGWCKGRKDGRVGLYPRQLR.

The protein is Antigen EG13 (EG13) of Echinococcus granulosus (Hydatid tapeworm).